The sequence spans 502 residues: Lanosterol 14-alpha demethylase (502 aa).

Residues 22–42 traverse the membrane as a helical segment; the sequence is GNLASMLLIACAFTLSLVYLF. A heme-binding site is contributed by Cys448.

This sequence belongs to the cytochrome P450 family. It depends on heme as a cofactor. In terms of processing, ubiquitinated by MARCHF6, leading to proteasomal degradation.

It is found in the endoplasmic reticulum membrane. The protein resides in the microsome membrane. It carries out the reaction a 14alpha-methyl steroid + 3 reduced [NADPH--hemoprotein reductase] + 3 O2 = a Delta(14) steroid + formate + 3 oxidized [NADPH--hemoprotein reductase] + 4 H2O + 4 H(+). The enzyme catalyses lanosterol + 3 reduced [NADPH--hemoprotein reductase] + 3 O2 = 4,4-dimethyl-5alpha-cholesta-8,14,24-trien-3beta-ol + formate + 3 oxidized [NADPH--hemoprotein reductase] + 4 H2O + 4 H(+). The catalysed reaction is 24,25-dihydrolanosterol + 3 reduced [NADPH--hemoprotein reductase] + 3 O2 = 4,4-dimethyl-8,14-cholestadien-3beta-ol + formate + 3 oxidized [NADPH--hemoprotein reductase] + 4 H2O + 4 H(+). It catalyses the reaction a 14alpha-methyl steroid + reduced [NADPH--hemoprotein reductase] + O2 = a 14alpha-hydroxymethyl steroid + oxidized [NADPH--hemoprotein reductase] + H2O + H(+). It carries out the reaction a 14alpha-hydroxymethyl steroid + reduced [NADPH--hemoprotein reductase] + O2 = a 14alpha-formyl steroid + oxidized [NADPH--hemoprotein reductase] + 2 H2O + H(+). The enzyme catalyses a 14alpha-formyl steroid + reduced [NADPH--hemoprotein reductase] + O2 = a Delta(14) steroid + formate + oxidized [NADPH--hemoprotein reductase] + H2O + 2 H(+). The catalysed reaction is lanosterol + reduced [NADPH--hemoprotein reductase] + O2 = 32-hydroxylanosterol + oxidized [NADPH--hemoprotein reductase] + H2O + H(+). It catalyses the reaction 32-hydroxylanosterol + reduced [NADPH--hemoprotein reductase] + O2 = 32-oxolanosterol + oxidized [NADPH--hemoprotein reductase] + 2 H2O + H(+). It carries out the reaction 32-oxolanosterol + reduced [NADPH--hemoprotein reductase] + O2 = 4,4-dimethyl-5alpha-cholesta-8,14,24-trien-3beta-ol + formate + oxidized [NADPH--hemoprotein reductase] + H2O + 2 H(+). The enzyme catalyses 24,25-dihydrolanosterol + reduced [NADPH--hemoprotein reductase] + O2 = 32-hydroxy-24,25-dihydrolanosterol + oxidized [NADPH--hemoprotein reductase] + H2O + H(+). The catalysed reaction is 32-hydroxy-24,25-dihydrolanosterol + reduced [NADPH--hemoprotein reductase] + O2 = 32-oxo-24,25-dihydrolanosterol + oxidized [NADPH--hemoprotein reductase] + 2 H2O + H(+). It catalyses the reaction 32-oxo-24,25-dihydrolanosterol + reduced [NADPH--hemoprotein reductase] + O2 = 4,4-dimethyl-8,14-cholestadien-3beta-ol + formate + oxidized [NADPH--hemoprotein reductase] + H2O + 2 H(+). It functions in the pathway steroid biosynthesis; zymosterol biosynthesis; zymosterol from lanosterol: step 1/6. Inhibited by azalanstat. Inhibited by azole antifungal agents ketoconazole, itraconazole and fluconazole. Functionally, sterol 14alpha-demethylase that plays a critical role in the cholesterol biosynthesis pathway, being cholesterol the major sterol component in mammalian membranes as well as a precursor for bile acid and steroid hormone synthesis. Cytochrome P450 monooxygenase that catalyzes the three-step oxidative removal of the 14alpha-methyl group (C-32) of sterols such as lanosterol (lanosta-8,24-dien-3beta-ol) and 24,25-dihydrolanosterol (DHL) in the form of formate, and converts the sterols to 4,4-dimethyl-5alpha-cholesta-8,14,24-trien-3beta-ol and 4,4-dimethyl-8,14-cholestadien-3beta-ol, respectively, which are intermediates of cholesterol biosynthesis. Can also demethylate substrates not intrinsic to mammals, such as eburicol (24-methylene-24,25-dihydrolanosterol), but at a lower rate than DHL. The polypeptide is Lanosterol 14-alpha demethylase (Bos taurus (Bovine)).